Reading from the N-terminus, the 176-residue chain is Nucleoside triphosphate/diphosphate phosphatase (176 aa).

Catalysis depends on arginine 23, which acts as the Proton donor. The Mg(2+) site is built by asparagine 87, aspartate 103, aspartate 105, aspartate 107, aspartate 120, and glutamate 123.

This sequence belongs to the Ntdp family. Requires Mg(2+) as cofactor.

It catalyses the reaction a ribonucleoside 5'-triphosphate + H2O = a ribonucleoside 5'-diphosphate + phosphate + H(+). The catalysed reaction is a ribonucleoside 5'-diphosphate + H2O = a ribonucleoside 5'-phosphate + phosphate + H(+). Functionally, has nucleoside phosphatase activity towards nucleoside triphosphates and nucleoside diphosphates. The protein is Nucleoside triphosphate/diphosphate phosphatase of Bacillus mycoides (strain KBAB4) (Bacillus weihenstephanensis).